Here is a 424-residue protein sequence, read N- to C-terminus: Enolase (424 aa).

Residue Gln-165 participates in (2R)-2-phosphoglycerate binding. The active-site Proton donor is the Glu-207. Residues Asp-244, Glu-283, and Asp-310 each contribute to the Mg(2+) site. Residues Lys-335, Arg-364, Ser-365, and Lys-386 each contribute to the (2R)-2-phosphoglycerate site. Lys-335 functions as the Proton acceptor in the catalytic mechanism.

Belongs to the enolase family. The cofactor is Mg(2+).

The protein localises to the cytoplasm. The protein resides in the secreted. It is found in the cell surface. The catalysed reaction is (2R)-2-phosphoglycerate = phosphoenolpyruvate + H2O. It participates in carbohydrate degradation; glycolysis; pyruvate from D-glyceraldehyde 3-phosphate: step 4/5. Its function is as follows. Catalyzes the reversible conversion of 2-phosphoglycerate (2-PG) into phosphoenolpyruvate (PEP). It is essential for the degradation of carbohydrates via glycolysis. This is Enolase from Chlamydia trachomatis serovar D (strain ATCC VR-885 / DSM 19411 / UW-3/Cx).